Reading from the N-terminus, the 230-residue chain is Cytidylate kinase (230 aa).

Residue 12–20 (GPSGAGKGT) participates in ATP binding.

Belongs to the cytidylate kinase family. Type 1 subfamily.

The protein resides in the cytoplasm. It catalyses the reaction CMP + ATP = CDP + ADP. It carries out the reaction dCMP + ATP = dCDP + ADP. The polypeptide is Cytidylate kinase (Shewanella oneidensis (strain ATCC 700550 / JCM 31522 / CIP 106686 / LMG 19005 / NCIMB 14063 / MR-1)).